Here is a 201-residue protein sequence, read N- to C-terminus: Probable quinol oxidase subunit 3 (201 aa).

The next 5 helical transmembrane spans lie at 20–40 (LGFW…FATL), 62–82 (LILI…IAIY), 91–111 (LMMF…GFEI), 133–153 (FFIL…WVIC), and 172–192 (FIVS…FTAV).

Belongs to the cytochrome c oxidase subunit 3 family.

The protein localises to the cell membrane. It carries out the reaction 2 a quinol + O2 = 2 a quinone + 2 H2O. In terms of biological role, catalyzes quinol oxidation with the concomitant reduction of oxygen to water. The sequence is that of Probable quinol oxidase subunit 3 (qoxC) from Staphylococcus epidermidis (strain ATCC 35984 / DSM 28319 / BCRC 17069 / CCUG 31568 / BM 3577 / RP62A).